The primary structure comprises 430 residues: MQMNIGRCGPVCFSCSAPPSKSYTHRALIIAALADGQSEIIGQLDADDTRMTARALMQLGVRLDWSRENIRVQGTGGHLKAPVEEINIQDSGTSMRLLTGVSLLADGPVVLTGSGRMQERPLGPLIDTLNNAGAKITCLKNPGCPPVRIDGTFPAGDMYVDGSISSQFISSLLIAAPYADNDVHIHLTGDPVSLPYIMMTIDSMRAFGAEVLVDGDDKEPVFTISSQRRYKPQTYGIEGDFSSSSYWFALAAICGGSATISGLNPQSAQGDRRLLEILVNMGCSITEKRESIILSRDPDVLLKGIKVDMADCPDIVQTVCMVAAVSSSPTRITGVHHLRMKESDRIAAIANGLTTLGGRVETEEDVIVIHPAPLHGGIIHPENDHRTAMSFAVLGCFIGDVTILDAECVTKSYPGFWEELRRIWQNAVLC.

3-phosphoshikimate-binding residues include Lys-21, Ser-22, and Arg-26. Residue Lys-21 coordinates phosphoenolpyruvate. The phosphoenolpyruvate site is built by Gly-92 and Arg-120. Residues Ser-165, Ser-166, Gln-167, Ser-193, Asp-314, and Lys-341 each coordinate 3-phosphoshikimate. Gln-167 contacts phosphoenolpyruvate. The Proton acceptor role is filled by Asp-314. Residues Arg-345, Arg-386, and Lys-411 each contribute to the phosphoenolpyruvate site.

This sequence belongs to the EPSP synthase family. In terms of assembly, monomer.

It localises to the cytoplasm. It catalyses the reaction 3-phosphoshikimate + phosphoenolpyruvate = 5-O-(1-carboxyvinyl)-3-phosphoshikimate + phosphate. It functions in the pathway metabolic intermediate biosynthesis; chorismate biosynthesis. Functionally, catalyzes the transfer of the enolpyruvyl moiety of phosphoenolpyruvate (PEP) to the 5-hydroxyl of shikimate-3-phosphate (S3P) to produce enolpyruvyl shikimate-3-phosphate and inorganic phosphate. The protein is 3-phosphoshikimate 1-carboxyvinyltransferase of Methanospirillum hungatei JF-1 (strain ATCC 27890 / DSM 864 / NBRC 100397 / JF-1).